Reading from the N-terminus, the 286-residue chain is 2-hydroxy-6-oxo-6-phenylhexa-2,4-dienoate hydrolase (286 aa).

Residues 42–43 (GG), N51, K111, S180, and R190 contribute to the substrate site. The AB hydrolase-1 domain occupies 173–271 (NVFLFDQSLI…RCVHWAQWEH (99 aa)). The Proton acceptor role is filled by H265. Substrate is bound at residue W266.

It belongs to the AB hydrolase superfamily. BphD family. In terms of assembly, homodimer.

The enzyme catalyses 2,6-dioxo-6-phenylhexa-3-enoate + H2O = 2-oxopent-4-enoate + benzoate + H(+). It functions in the pathway xenobiotic degradation; biphenyl degradation; 2-hydroxy-2,4-pentadienoate and benzoate from biphenyl: step 4/4. Functionally, catalyzes an unusual C-C bond hydrolysis of 2-hydroxy-6-oxo-6-phenylhexa-2,4-dienoic acid (HOPDA) to produce benzoic acid and 2-hydroxy-2,4-pentadienoic acid (HPD). This is 2-hydroxy-6-oxo-6-phenylhexa-2,4-dienoate hydrolase from Delftia acidovorans (Pseudomonas acidovorans).